Here is a 388-residue protein sequence, read N- to C-terminus: Protein kes1 (388 aa).

This sequence belongs to the OSBP family.

In terms of biological role, lipid transporter involved in lipid countertransport between the Golgi complex and membranes of the endoplasmic reticulum: specifically exchanges sterol with phosphatidylinositol 4-phosphate (PI4P), delivering sterol to the Golgi in exchange for PI4P, which is degraded by the SAC1 phosphatase in the endoplasmic reticulum. In Schizosaccharomyces pombe (strain 972 / ATCC 24843) (Fission yeast), this protein is Protein kes1 (kes1).